A 58-amino-acid polypeptide reads, in one-letter code: Small ribosomal subunit protein bS21B (58 aa).

Belongs to the bacterial ribosomal protein bS21 family.

The protein is Small ribosomal subunit protein bS21B (rpsU2) of Nostoc sp. (strain PCC 7120 / SAG 25.82 / UTEX 2576).